Consider the following 211-residue polypeptide: NADH-quinone oxidoreductase subunit I (211 aa).

4Fe-4S ferredoxin-type domains lie at 90-119 (RLWE…IDTK) and 129-158 (TEYS…HGGE). [4Fe-4S] cluster contacts are provided by Cys99, Cys102, Cys105, Cys109, Cys138, Cys141, Cys144, and Cys148.

This sequence belongs to the complex I 23 kDa subunit family. In terms of assembly, NDH-1 is composed of 14 different subunits. Subunits NuoA, H, J, K, L, M, N constitute the membrane sector of the complex. It depends on [4Fe-4S] cluster as a cofactor.

The protein resides in the cell inner membrane. The catalysed reaction is a quinone + NADH + 5 H(+)(in) = a quinol + NAD(+) + 4 H(+)(out). Functionally, NDH-1 shuttles electrons from NADH, via FMN and iron-sulfur (Fe-S) centers, to quinones in the respiratory chain. The immediate electron acceptor for the enzyme in this species is believed to be ubiquinone. Couples the redox reaction to proton translocation (for every two electrons transferred, four hydrogen ions are translocated across the cytoplasmic membrane), and thus conserves the redox energy in a proton gradient. The polypeptide is NADH-quinone oxidoreductase subunit I (Sulfurimonas denitrificans (strain ATCC 33889 / DSM 1251) (Thiomicrospira denitrificans (strain ATCC 33889 / DSM 1251))).